Consider the following 308-residue polypeptide: ADP-L-glycero-D-manno-heptose-6-epimerase (308 aa).

NADP(+)-binding positions include 10 to 11 (FI), 31 to 32 (DN), K38, K53, 75 to 79 (EGACS), and N92. The active-site Proton acceptor is Y139. NADP(+) is bound at residue K143. N168 lines the substrate pocket. The NADP(+) site is built by V169 and K177. The active-site Proton acceptor is K177. Substrate contacts are provided by residues S179, H186, 200-203 (FAGS), R208, and Y271.

This sequence belongs to the NAD(P)-dependent epimerase/dehydratase family. HldD subfamily. In terms of assembly, homopentamer. The cofactor is NADP(+).

The catalysed reaction is ADP-D-glycero-beta-D-manno-heptose = ADP-L-glycero-beta-D-manno-heptose. The protein operates within nucleotide-sugar biosynthesis; ADP-L-glycero-beta-D-manno-heptose biosynthesis; ADP-L-glycero-beta-D-manno-heptose from D-glycero-beta-D-manno-heptose 7-phosphate: step 4/4. In terms of biological role, catalyzes the interconversion between ADP-D-glycero-beta-D-manno-heptose and ADP-L-glycero-beta-D-manno-heptose via an epimerization at carbon 6 of the heptose. This is ADP-L-glycero-D-manno-heptose-6-epimerase from Actinobacillus succinogenes (strain ATCC 55618 / DSM 22257 / CCUG 43843 / 130Z).